We begin with the raw amino-acid sequence, 574 residues long: Interleukin-1 receptor-like 2 (574 aa).

Residues 1–21 (MGVTSLLFCGVFFLLLLFVAA) form the signal peptide. Over 22-338 (DTCEDIFMHN…ILIYPVPDFR (317 aa)) the chain is Extracellular. 3 consecutive Ig-like C2-type domains span residues 25-113 (EDIF…VNLT), 132-215 (PDVY…IRNY), and 225-321 (YGRR…TCHA). Residues Asn-43, Asn-55, and Asn-111 are each glycosylated (N-linked (GlcNAc...) asparagine). Cys-44 and Cys-97 form a disulfide bridge. Cys-149 and Cys-199 are joined by a disulfide. Asn-231, Asn-237, Asn-253, Asn-269, Asn-290, and Asn-302 each carry an N-linked (GlcNAc...) asparagine glycan. Cys-252 and Cys-319 are oxidised to a cystine. Residues 339 to 359 (AYLLGGLMAFLLLVVSVLFIY) traverse the membrane as a helical segment. Residues 360–574 (NSFKIDIMLW…CNAATGLITP (215 aa)) are Cytoplasmic-facing. In terms of domain architecture, TIR spans 384-539 (KLYDAYVLYP…KFWKKVRYHM (156 aa)). Residue Glu-470 is part of the active site.

The protein belongs to the interleukin-1 receptor family. As to quaternary structure, interacts with IL1RAP; the association is enhanced by IL36B indicative for an functional signaling complex and inhibited by IL36RN. In terms of tissue distribution, expressed in bone marrow-derived dendritic cells, splenic CD4(+) T-cells, bone marrow-derived macrophages and bone marrow-derived neutrophils.

It is found in the membrane. It carries out the reaction NAD(+) + H2O = ADP-D-ribose + nicotinamide + H(+). Its function is as follows. Receptor for interleukin-36 (IL36A, IL36B and IL36G). After binding to interleukin-36 associates with the coreceptor IL1RAP to form the interleukin-36 receptor complex which mediates interleukin-36-dependent activation of NF-kappa-B, MAPK and other pathways. The IL-36 signaling system is thought to be present in epithelial barriers and to take part in local inflammatory response; it is similar to the IL-1 system. Seems to be involved in skin inflammatory response by induction of the IL-23/IL-17/IL-22 pathway. The polypeptide is Interleukin-1 receptor-like 2 (Il1rl2) (Mus musculus (Mouse)).